Consider the following 336-residue polypeptide: Potassium channel subfamily K member 1 (336 aa).

Residues 1–20 lie on the Cytoplasmic side of the membrane; that stretch reads MLQSLAGSSCVRLVERHRSA. Residues 21 to 41 traverse the membrane as a helical segment; the sequence is WCFGFLVLGYLLYLVFGAVVF. Residues 42-103 are Extracellular-facing; the sequence is SSVELPYEDL…SNASGNWNWD (62 aa). A glycan (N-linked (GlcNAc...) asparagine) is linked at N95. The segment at residues 104–116 is an intramembrane region (helical); sequence FTSALFFASTVLS. An intramembrane segment occupies 117–122; it reads TTGYGH. The tract at residues 117 to 122 is selectivity filter 1; the sequence is TTGYGH. The Extracellular portion of the chain corresponds to 123–132; the sequence is TVPLSDGGKA. A helical transmembrane segment spans residues 133–156; sequence FCIIYSVIGIPFTLLFLTAVVQRI. Topologically, residues 157 to 181 are cytoplasmic; sequence TVHVTRRPVLYFHIRWGFSKQVVAI. The chain crosses the membrane as a helical span at residues 182–202; that stretch reads VHAVLLGFVTVSCFFFIPAAV. The Extracellular portion of the chain corresponds to 203–211; the sequence is FSVLEDDWN. The segment at residues 212 to 224 is an intramembrane region (helical); the sequence is FLESFYFCFISLS. Residues 225–230 form a selectivity filter 2 region; the sequence is TIGLGD. The stretch at 225–231 is an intramembrane region; it reads TIGLGDY. At 232–243 the chain is on the extracellular side; the sequence is VPGEGYNQKFRE. A helical transmembrane segment spans residues 244–267; it reads LYKIGITCYLLLGLIAMLVVLETF. Over 268–336 the chain is Cytoplasmic; that stretch reads CELHELKKFR…SACVDGPANH (69 aa). A Glycyl lysine isopeptide (Lys-Gly) (interchain with G-Cter in SUMO) cross-link involves residue K274. The important for intracellular retention in recycling endosomes stretch occupies residues 293-299; that stretch reads IIEHDQL. S326 carries the phosphoserine modification.

Belongs to the two pore domain potassium channel (TC 1.A.1.8) family. As to quaternary structure, homodimer; disulfide-linked. Heterodimer with KCNK2; disulfide-linked. In astrocytes, forms mostly heterodimeric potassium channels with KCNK2, with only a minor proportion of functional channels containing homodimeric KCNK1. Interacts with KCNK3 and KCNK9, forming functional heterodimeric channels. Interacts with GNG4. Identified in a complex with PSD and ARF6; interacts only with PSD that is bound to ARF6. Interacts with UBE2I. Post-translationally, sumoylation is controversial. Sumoylated by UBE2I. Not sumoylated when expressed in xenopus oocytes or mammalian cells. Sumoylation inactivates the channel, but does not interfere with expression at the cell membrane. Sumoylation of a single subunit is sufficient to silence the dimeric channel. Sumoylation of KCNK1 is sufficient to silence heterodimeric channels formed by KCNK1 and KCNK3 or KCNK9. Desumoylated by SENP1; this activates the channel. Desumoylated by SENP1; this strongly increases halothane-mediated activation of heterodimeric channels formed with KCNK9. SENP1 treatment has no effect. In terms of tissue distribution, detected in bronchial epithelial cells. Detected in heart left atrium and left ventricle. Detected in cardiac myocytes (at protein level). Widely expressed with high levels in heart, brain and kidney, and lower levels in colon, ovary, placenta, lung and liver. Highly expressed in cerebellum, and detected at lower levels in amygdala, caudate nucleus, brain cortex, hippocampus, putamen, substantia nigra, thalamus, dorsal root ganglion, spinal cord, pituitary, heart, kidney, lung, placenta, pancreas, stomach, small intestine, uterus and prostate. Detected in right and left heart ventricle and atrium, and in heart Purkinje fibers.

It is found in the cell membrane. Its subcellular location is the recycling endosome. The protein resides in the synaptic cell membrane. It localises to the cytoplasmic vesicle. The protein localises to the perikaryon. It is found in the cell projection. Its subcellular location is the dendrite. The protein resides in the apical cell membrane. It catalyses the reaction K(+)(in) = K(+)(out). The catalysed reaction is NH4(+)(in) = NH4(+)(out). It carries out the reaction Na(+)(in) = Na(+)(out). The enzyme catalyses Rb(+)(in) = Rb(+)(out). It catalyses the reaction Cs(+)(in) = Cs(+)(out). The catalysed reaction is Li(+)(in) = Li(+)(out). It carries out the reaction L-glutamate(out) = L-glutamate(in). The enzyme catalyses chloride(in) = chloride(out). Its activity is regulated as follows. Inhibited by Ba(2+) ions and quinidine. Inhibited by quinine. Is slightly inhibited by 10 mM tetraethylammonium (TEA), and only marginally inhibited by 4-aminopyridine, charybdotoxin and dendrotoxin. Lowering the extracellular pH to below 6.5 transiently activates the channel, and then inhibits channel activity. Inhibited when the intracellular pH is decreased down to pH 6.0, but this may be due to indirect effects. Ion channel that contributes to passive transmembrane potassium transport and to the regulation of the resting membrane potential in brain astrocytes, but also in kidney and in other tissues. Forms dimeric channels through which potassium ions pass in accordance with their electrochemical gradient. The channel is selective for K(+) ions at physiological potassium concentrations and at neutral pH, but becomes permeable to Na(+) at subphysiological K(+) levels and upon acidification of the extracellular medium. The homodimer has very low potassium channel activity, when expressed in heterologous systems, and can function as weakly inward rectifying potassium channel. Channel activity is modulated by activation of serotonin receptors. Heterodimeric channels containing KCNK1 and KCNK2 have much higher activity, and may represent the predominant form in astrocytes. Heterodimeric channels containing KCNK1 and KCNK3 or KCNK9 have much higher activity. Heterodimeric channels formed by KCNK1 and KCNK9 may contribute to halothane-sensitive currents. Mediates outward rectifying potassium currents in dentate gyrus granule cells and contributes to the regulation of their resting membrane potential. Contributes to the regulation of action potential firing in dentate gyrus granule cells and down-regulates their intrinsic excitability. In astrocytes, the heterodimer formed by KCNK1 and KCNK2 is required for rapid glutamate release in response to activation of G-protein coupled receptors, such as F2R and CNR1. Required for normal ion and water transport in the kidney. Contributes to the regulation of the resting membrane potential of pancreatic beta cells. The low channel activity of homodimeric KCNK1 may be due to sumoylation. The low channel activity may be due to rapid internalization from the cell membrane and retention in recycling endosomes. Permeable to monovalent cations with ion selectivity for K(+) &gt; Rb(+) &gt;&gt; NH4(+) &gt;&gt; Cs(+) = Na(+) = Li(+). The sequence is that of Potassium channel subfamily K member 1 (KCNK1) from Homo sapiens (Human).